The chain runs to 250 residues: Ribonuclease PH (250 aa).

Residues arginine 99 and 137 to 139 contribute to the phosphate site; that span reads GTR.

The protein belongs to the RNase PH family. Homohexameric ring arranged as a trimer of dimers.

It catalyses the reaction tRNA(n+1) + phosphate = tRNA(n) + a ribonucleoside 5'-diphosphate. Functionally, phosphorolytic 3'-5' exoribonuclease that plays an important role in tRNA 3'-end maturation. Removes nucleotide residues following the 3'-CCA terminus of tRNAs; can also add nucleotides to the ends of RNA molecules by using nucleoside diphosphates as substrates, but this may not be physiologically important. Probably plays a role in initiation of 16S rRNA degradation (leading to ribosome degradation) during starvation. In Bordetella parapertussis (strain 12822 / ATCC BAA-587 / NCTC 13253), this protein is Ribonuclease PH.